The primary structure comprises 168 residues: Mitochondrial inner membrane protein SHH4 (168 aa).

The transit peptide at Met-1–Ser-23 directs the protein to the mitochondrion. The Mitochondrial matrix segment spans residues Phe-24–Arg-65. A helical transmembrane segment spans residues Gly-66–Ser-86. The Mitochondrial intermembrane segment spans residues Thr-87–Phe-92. A helical membrane pass occupies residues Leu-93–Ile-113. Residue Cys-101 coordinates heme. Tyr-112 contributes to the a ubiquinone binding site. The Mitochondrial matrix segment spans residues Ser-114–Lys-120. The chain crosses the membrane as a helical span at residues Val-121–Tyr-141. The Mitochondrial intermembrane segment spans residues Lys-142–Gln-168.

Belongs to the CybS family. In terms of assembly, interacts with SDH3.

The protein localises to the mitochondrion inner membrane. Functionally, homolog of SDH4, but seems not to be a stoichiometric subunit of either the succinate dehydrogenase (SDH) complex or the mitochondrial inner membrane translocase TIM22 complex. The chain is Mitochondrial inner membrane protein SHH4 from Saccharomyces cerevisiae (strain ATCC 204508 / S288c) (Baker's yeast).